A 115-amino-acid polypeptide reads, in one-letter code: NADH-ubiquinone oxidoreductase chain 3 (115 aa).

Helical transmembrane passes span 3–23, 55–75, and 86–106; these read LLII…IAFW, FFLV…LLPL, and TMMA…SYEW.

The protein belongs to the complex I subunit 3 family. Core subunit of respiratory chain NADH dehydrogenase (Complex I) which is composed of 45 different subunits. Interacts with TMEM186. Interacts with TMEM242.

It is found in the mitochondrion inner membrane. It catalyses the reaction a ubiquinone + NADH + 5 H(+)(in) = a ubiquinol + NAD(+) + 4 H(+)(out). Functionally, core subunit of the mitochondrial membrane respiratory chain NADH dehydrogenase (Complex I) which catalyzes electron transfer from NADH through the respiratory chain, using ubiquinone as an electron acceptor. Essential for the catalytic activity of complex I. The polypeptide is NADH-ubiquinone oxidoreductase chain 3 (Rattus norvegicus (Rat)).